The following is a 227-amino-acid chain: Probable septum site-determining protein MinC (227 aa).

It belongs to the MinC family. Interacts with MinD and FtsZ.

Its function is as follows. Cell division inhibitor that blocks the formation of polar Z ring septums. Rapidly oscillates between the poles of the cell to destabilize FtsZ filaments that have formed before they mature into polar Z rings. Prevents FtsZ polymerization. This Photorhabdus laumondii subsp. laumondii (strain DSM 15139 / CIP 105565 / TT01) (Photorhabdus luminescens subsp. laumondii) protein is Probable septum site-determining protein MinC.